Reading from the N-terminus, the 231-residue chain is Orotidine 5'-phosphate decarboxylase (231 aa).

Substrate contacts are provided by residues D11, K33, 60–69 (DLKLHDIPNT), T119, R181, Q190, G210, and R211. The active-site Proton donor is the K62.

The protein belongs to the OMP decarboxylase family. Type 1 subfamily. As to quaternary structure, homodimer.

The catalysed reaction is orotidine 5'-phosphate + H(+) = UMP + CO2. Its pathway is pyrimidine metabolism; UMP biosynthesis via de novo pathway; UMP from orotate: step 2/2. Functionally, catalyzes the decarboxylation of orotidine 5'-monophosphate (OMP) to uridine 5'-monophosphate (UMP). This is Orotidine 5'-phosphate decarboxylase from Malacoplasma penetrans (strain HF-2) (Mycoplasma penetrans).